We begin with the raw amino-acid sequence, 433 residues long: Glutamate-1-semialdehyde 2,1-aminomutase (433 aa).

Lys273 carries the post-translational modification N6-(pyridoxal phosphate)lysine.

Belongs to the class-III pyridoxal-phosphate-dependent aminotransferase family. HemL subfamily. As to quaternary structure, homodimer. It depends on pyridoxal 5'-phosphate as a cofactor.

Its subcellular location is the cytoplasm. The catalysed reaction is (S)-4-amino-5-oxopentanoate = 5-aminolevulinate. The protein operates within porphyrin-containing compound metabolism; protoporphyrin-IX biosynthesis; 5-aminolevulinate from L-glutamyl-tRNA(Glu): step 2/2. Its pathway is porphyrin-containing compound metabolism; chlorophyll biosynthesis. The chain is Glutamate-1-semialdehyde 2,1-aminomutase from Gloeothece citriformis (strain PCC 7424) (Cyanothece sp. (strain PCC 7424)).